Here is a 348-residue protein sequence, read N- to C-terminus: Holliday junction branch migration complex subunit RuvB (348 aa).

A large ATPase domain (RuvB-L) region spans residues 1 to 181; it reads MEERMITPQQ…FGVISRLEFY (181 aa). ATP is bound by residues L20, R21, G62, K65, T66, T67, R171, Y181, and R218. Mg(2+) is bound at residue T66. Positions 182–252 are small ATPAse domain (RuvB-S); that stretch reads EVEDLIRIIT…LAGKSLDRLE (71 aa). Residues 255 to 348 are head domain (RuvB-H); the sequence is PAGLDRIDQK…GDSLFDAAED (94 aa). 2 residues coordinate DNA: R310 and R315. A disordered region spans residues 329–348; that stretch reads VNSSHQEGGQGDSLFDAAED.

The protein belongs to the RuvB family. In terms of assembly, homohexamer. Forms an RuvA(8)-RuvB(12)-Holliday junction (HJ) complex. HJ DNA is sandwiched between 2 RuvA tetramers; dsDNA enters through RuvA and exits via RuvB. An RuvB hexamer assembles on each DNA strand where it exits the tetramer. Each RuvB hexamer is contacted by two RuvA subunits (via domain III) on 2 adjacent RuvB subunits; this complex drives branch migration. In the full resolvosome a probable DNA-RuvA(4)-RuvB(12)-RuvC(2) complex forms which resolves the HJ.

Its subcellular location is the cytoplasm. The catalysed reaction is ATP + H2O = ADP + phosphate + H(+). In terms of biological role, the RuvA-RuvB-RuvC complex processes Holliday junction (HJ) DNA during genetic recombination and DNA repair, while the RuvA-RuvB complex plays an important role in the rescue of blocked DNA replication forks via replication fork reversal (RFR). RuvA specifically binds to HJ cruciform DNA, conferring on it an open structure. The RuvB hexamer acts as an ATP-dependent pump, pulling dsDNA into and through the RuvAB complex. RuvB forms 2 homohexamers on either side of HJ DNA bound by 1 or 2 RuvA tetramers; 4 subunits per hexamer contact DNA at a time. Coordinated motions by a converter formed by DNA-disengaged RuvB subunits stimulates ATP hydrolysis and nucleotide exchange. Immobilization of the converter enables RuvB to convert the ATP-contained energy into a lever motion, pulling 2 nucleotides of DNA out of the RuvA tetramer per ATP hydrolyzed, thus driving DNA branch migration. The RuvB motors rotate together with the DNA substrate, which together with the progressing nucleotide cycle form the mechanistic basis for DNA recombination by continuous HJ branch migration. Branch migration allows RuvC to scan DNA until it finds its consensus sequence, where it cleaves and resolves cruciform DNA. The polypeptide is Holliday junction branch migration complex subunit RuvB (Desulfitobacterium hafniense (strain DSM 10664 / DCB-2)).